The primary structure comprises 463 residues: Fumarate hydratase class II (463 aa).

Substrate contacts are provided by residues 97-99, 128-131, 138-140, and T186; these read SGT, HPND, and SSN. Catalysis depends on H187, which acts as the Proton donor/acceptor. S317 is a catalytic residue. Substrate is bound by residues S318 and 323–325; that span reads KVN.

Belongs to the class-II fumarase/aspartase family. Fumarase subfamily. As to quaternary structure, homotetramer.

The protein resides in the cytoplasm. It carries out the reaction (S)-malate = fumarate + H2O. Its pathway is carbohydrate metabolism; tricarboxylic acid cycle; (S)-malate from fumarate: step 1/1. Functionally, involved in the TCA cycle. Catalyzes the stereospecific interconversion of fumarate to L-malate. The polypeptide is Fumarate hydratase class II (Helicobacter pylori (strain ATCC 700392 / 26695) (Campylobacter pylori)).